We begin with the raw amino-acid sequence, 810 residues long: MAELNLSNLTEADIITKCVMPAILNAGWDNTTQIRQEVKLRDGKVIVRGKVAARRTVKSADIVLYHKPGIPLAVIEAKANKHEIGKGMQQGIEYARLLDVPFVFATNGDGFIFRDATAAEGECLEKQITLDDFPSPAELWQKFCLWKGYTQAQLPVITQDYYDDGSGKSPRYYQLQAINKTIEAVSNGQNRVLLVMATGTGKTYTAFQIIWRLWKSKNKKRILFLADRNILVDQTKNNDFQPFGTAMTKVSGRTIDPAYEIHLALYQAITGPEEDQKAFKQVAPDFFDLIVIDECHRGSASEDSAWREILDYFSSATQIGLTATPKETHEVSSTDYFGDPVYVYSLKEGIEDGFLAPYKVVRVDIDVDLQGWRPTKGQTDLNGEVIDDRIYNQKDFDRTMVIDERTELVARTITDYLKRTNPMDKTIVFCNDIDHAERMRRALVNLNPEQVKKNDKYVMKITGDDEIGKAQLDNFINPKKPYPVIATTSELMTTGVDAKTCKLVVLDQNIQSMTKFKQIIGRGTRIDERYGKLWFTILDFKKATELFADERFDGIPEKVMDTTPEDIADPESDFEEKLEEISEHDEEQVTGVDEPPAPPYQVTDTDDVGPLPEEDEKKIRKFHVNGVAVGVIAQRVQYYDADGKLVTESFKDYTRKTLLKEYASLDDFTRKWQDADRKEAIIHELEQQGIIWEVLAEEVGKDLDPFDMLCHVVYGQPPLTRKERAENVRKRNYFTKYSEAAQAVLDNLLDKYADAGVQEIESIQVLKLKPFDSMGTLPEIIKTGFGDRNGYNQALSELENEIYQLPPRSA.

The region spanning 183–343 is the Helicase ATP-binding domain; it reads EAVSNGQNRV…TDYFGDPVYV (161 aa). Residue 197-203 participates in ATP binding; it reads ATGTGKT. Residues 412–575 form the Helicase C-terminal domain; sequence TITDYLKRTN…DIADPESDFE (164 aa). Acidic residues predominate over residues 578-588; the sequence is LEEISEHDEEQ. Residues 578–608 form a disordered region; it reads LEEISEHDEEQVTGVDEPPAPPYQVTDTDDV.

Belongs to the HsdR family. In terms of assembly, the type I restriction/modification system is composed of three polypeptides R, M and S. The restriction enzyme has stoichiometry R(2)M(2)S(1) while the methyltransferase is M(2)S(1).

It carries out the reaction Endonucleolytic cleavage of DNA to give random double-stranded fragments with terminal 5'-phosphates, ATP is simultaneously hydrolyzed.. The subtype B restriction (R) subunit of a type I restriction enzyme that recognizes 5'-GAGN(7)GTCA-3' and cleaves a random distance away. Subunit R is required for both nuclease and ATPase activities, but not for modification. After locating a non-methylated recognition site, the enzyme complex serves as a molecular motor that translocates DNA in an ATP-dependent manner until a collision occurs that triggers cleavage. The polypeptide is Type I restriction enzyme EcoAI endonuclease subunit (Escherichia coli).